A 225-amino-acid polypeptide reads, in one-letter code: Cell division protein SepF (225 aa).

The segment at 22–116 is disordered; it reads EYLDEPEPAR…TRGALAVDTR (95 aa). 2 stretches are compositionally biased toward basic and acidic residues: residues 28 to 54 and 77 to 86; these read EPAR…RDFA and RYDGPRHSSR.

It belongs to the SepF family. In terms of assembly, homodimer. Interacts with FtsZ.

The protein resides in the cytoplasm. Cell division protein that is part of the divisome complex and is recruited early to the Z-ring. Probably stimulates Z-ring formation, perhaps through the cross-linking of FtsZ protofilaments. Its function overlaps with FtsA. In Rhodococcus jostii (strain RHA1), this protein is Cell division protein SepF.